A 311-amino-acid chain; its full sequence is Catabolite control protein B (311 aa).

The HTH lacI-type domain occupies Met1–Arg56. A DNA-binding region (H-T-H motif) is located at residues Ile4–Asn23.

As to quaternary structure, seems to be complexed to phosphorylated HPr.

Its function is as follows. Transcriptional regulator involved in catabolite repression of several operons. This chain is Catabolite control protein B (ccpB), found in Bacillus subtilis (strain 168).